We begin with the raw amino-acid sequence, 351 residues long: Probable dual-specificity RNA methyltransferase RlmN (351 aa).

The active-site Proton acceptor is Glu-97. One can recognise a Radical SAM core domain in the interval 103-337 (YDYGNTVCIS…VTVRKERGVD (235 aa)). An intrachain disulfide couples Cys-110 to Cys-342. Positions 117, 121, and 124 each coordinate [4Fe-4S] cluster. S-adenosyl-L-methionine contacts are provided by residues 166–167 (GE), Ser-198, 221–223 (SLH), and Asn-299. Cys-342 functions as the S-methylcysteine intermediate in the catalytic mechanism.

This sequence belongs to the radical SAM superfamily. RlmN family. It depends on [4Fe-4S] cluster as a cofactor.

The protein localises to the cytoplasm. It catalyses the reaction adenosine(2503) in 23S rRNA + 2 reduced [2Fe-2S]-[ferredoxin] + 2 S-adenosyl-L-methionine = 2-methyladenosine(2503) in 23S rRNA + 5'-deoxyadenosine + L-methionine + 2 oxidized [2Fe-2S]-[ferredoxin] + S-adenosyl-L-homocysteine. The catalysed reaction is adenosine(37) in tRNA + 2 reduced [2Fe-2S]-[ferredoxin] + 2 S-adenosyl-L-methionine = 2-methyladenosine(37) in tRNA + 5'-deoxyadenosine + L-methionine + 2 oxidized [2Fe-2S]-[ferredoxin] + S-adenosyl-L-homocysteine. Specifically methylates position 2 of adenine 2503 in 23S rRNA and position 2 of adenine 37 in tRNAs. The polypeptide is Probable dual-specificity RNA methyltransferase RlmN (Natranaerobius thermophilus (strain ATCC BAA-1301 / DSM 18059 / JW/NM-WN-LF)).